Here is a 411-residue protein sequence, read N- to C-terminus: Glucose-1-phosphate adenylyltransferase (411 aa).

Alpha-D-glucose 1-phosphate contacts are provided by residues Gly-164, 179 to 180, and Ser-197; that span reads EK.

Belongs to the bacterial/plant glucose-1-phosphate adenylyltransferase family. In terms of assembly, homotetramer.

It carries out the reaction alpha-D-glucose 1-phosphate + ATP + H(+) = ADP-alpha-D-glucose + diphosphate. Its pathway is glycan biosynthesis; glycogen biosynthesis. Its function is as follows. Involved in the biosynthesis of ADP-glucose, a building block required for the elongation reactions to produce glycogen. Catalyzes the reaction between ATP and alpha-D-glucose 1-phosphate (G1P) to produce pyrophosphate and ADP-Glc. This Corynebacterium kroppenstedtii (strain DSM 44385 / JCM 11950 / CIP 105744 / CCUG 35717) protein is Glucose-1-phosphate adenylyltransferase.